Consider the following 55-residue polypeptide: Large ribosomal subunit protein bL33 (55 aa).

The protein belongs to the bacterial ribosomal protein bL33 family.

This is Large ribosomal subunit protein bL33 from Rhodopseudomonas palustris (strain BisB18).